Reading from the N-terminus, the 170-residue chain is Photosystem I assembly protein Ycf3 (170 aa).

TPR repeat units follow at residues 35 to 68 (AFTYYRDGMLAQSEGNYAEALQNYYEATRLEIDP), 72 to 105 (SYILYNIGLIHTSNGEHTKALEYYFRALERNPFL), and 120 to 153 (GEQAILQGDSEIAEAWFDQAAEYWKQAIALTPGN).

The protein belongs to the Ycf3 family.

The protein localises to the plastid. Its subcellular location is the chloroplast thylakoid membrane. Essential for the assembly of the photosystem I (PSI) complex. May act as a chaperone-like factor to guide the assembly of the PSI subunits. The protein is Photosystem I assembly protein Ycf3 of Oryza nivara (Indian wild rice).